The following is a 217-amino-acid chain: MSLTLFDHEPQPAVWDFESRAARRGYRTIAGIDEAGRGPLAGPVVAAAVILPFGTDLPGVDDSKKLTPARRDDLFTLIQGTALAIGVGVADHKVIDRINILQATLAAMREAVECLTDPPDYLLVDGISPVPLPVAQQTIKKGDSASISIAAASIIAKVTRDRLMAEYDQLYPGYGFAEHKGYGSASHMAAIAALGPSPIHRTTFRGVREHLGESRCR.

The region spanning 27 to 216 (RTIAGIDEAG…VREHLGESRC (190 aa)) is the RNase H type-2 domain. Positions 33, 34, and 125 each coordinate a divalent metal cation.

Belongs to the RNase HII family. The cofactor is Mn(2+). Mg(2+) serves as cofactor.

The protein resides in the cytoplasm. It carries out the reaction Endonucleolytic cleavage to 5'-phosphomonoester.. Endonuclease that specifically degrades the RNA of RNA-DNA hybrids. The polypeptide is Ribonuclease HII (Geobacter sulfurreducens (strain ATCC 51573 / DSM 12127 / PCA)).